Reading from the N-terminus, the 418-residue chain is Serine hydroxymethyltransferase (418 aa).

(6S)-5,6,7,8-tetrahydrofolate contacts are provided by residues L121 and 125-127 (GHL). Residue K230 is modified to N6-(pyridoxal phosphate)lysine. 356-358 (SPF) provides a ligand contact to (6S)-5,6,7,8-tetrahydrofolate.

The protein belongs to the SHMT family. Homodimer. Pyridoxal 5'-phosphate serves as cofactor.

It is found in the cytoplasm. It carries out the reaction (6R)-5,10-methylene-5,6,7,8-tetrahydrofolate + glycine + H2O = (6S)-5,6,7,8-tetrahydrofolate + L-serine. Its pathway is one-carbon metabolism; tetrahydrofolate interconversion. The protein operates within amino-acid biosynthesis; glycine biosynthesis; glycine from L-serine: step 1/1. Catalyzes the reversible interconversion of serine and glycine with tetrahydrofolate (THF) serving as the one-carbon carrier. This reaction serves as the major source of one-carbon groups required for the biosynthesis of purines, thymidylate, methionine, and other important biomolecules. Also exhibits THF-independent aldolase activity toward beta-hydroxyamino acids, producing glycine and aldehydes, via a retro-aldol mechanism. The chain is Serine hydroxymethyltransferase from Shewanella sediminis (strain HAW-EB3).